The primary structure comprises 424 residues: L-rhamnose isomerase (424 aa).

Mn(2+) contacts are provided by H261, D293, and D295.

Belongs to the rhamnose isomerase family. Mn(2+) is required as a cofactor.

It is found in the cytoplasm. The enzyme catalyses L-rhamnopyranose = L-rhamnulose. Its pathway is carbohydrate degradation; L-rhamnose degradation; glycerone phosphate from L-rhamnose: step 1/3. Its function is as follows. Catalyzes the interconversion of L-rhamnose and L-rhamnulose. This chain is L-rhamnose isomerase, found in Bacillus subtilis (strain 168).